We begin with the raw amino-acid sequence, 557 residues long: Probable serine/threonine-protein kinase WNK7 (557 aa).

A Protein kinase domain is found at 28-285 (IRYKEVIGKG…AEELLLDSFL (258 aa)). ATP is bound by residues 108-111 (TELF) and lysine 158. Aspartate 175 functions as the Proton acceptor in the catalytic mechanism. The span at 451–477 (QNQSSKDNHQNGASSQAGESISHSLSS) shows a compositional bias: polar residues. Residues 451-517 (QNQSSKDNHQ…EEEEDERLKE (67 aa)) form a disordered region. Phosphoserine is present on serine 505.

It belongs to the protein kinase superfamily. Ser/Thr protein kinase family. WNK subfamily.

The enzyme catalyses L-seryl-[protein] + ATP = O-phospho-L-seryl-[protein] + ADP + H(+). It catalyses the reaction L-threonyl-[protein] + ATP = O-phospho-L-threonyl-[protein] + ADP + H(+). May regulate flowering time by modulating the photoperiod pathway. The protein is Probable serine/threonine-protein kinase WNK7 (WNK7) of Arabidopsis thaliana (Mouse-ear cress).